The sequence spans 121 residues: Small ribosomal subunit protein uS13 (121 aa).

The tract at residues 94 to 121 (GLPVRGQNTKNNARTRKGPRRTVANKKK) is disordered. A compositionally biased stretch (basic residues) spans 106-121 (ARTRKGPRRTVANKKK).

This sequence belongs to the universal ribosomal protein uS13 family. As to quaternary structure, part of the 30S ribosomal subunit. Forms a loose heterodimer with protein S19. Forms two bridges to the 50S subunit in the 70S ribosome.

Its function is as follows. Located at the top of the head of the 30S subunit, it contacts several helices of the 16S rRNA. In the 70S ribosome it contacts the 23S rRNA (bridge B1a) and protein L5 of the 50S subunit (bridge B1b), connecting the 2 subunits; these bridges are implicated in subunit movement. Contacts the tRNAs in the A and P-sites. This Anoxybacillus flavithermus (strain DSM 21510 / WK1) protein is Small ribosomal subunit protein uS13.